The sequence spans 171 residues: Endoribonuclease YbeY (171 aa).

Positions 130, 134, and 140 each coordinate Zn(2+).

The protein belongs to the endoribonuclease YbeY family. It depends on Zn(2+) as a cofactor.

Its subcellular location is the cytoplasm. In terms of biological role, single strand-specific metallo-endoribonuclease involved in late-stage 70S ribosome quality control and in maturation of the 3' terminus of the 16S rRNA. The protein is Endoribonuclease YbeY of Neisseria meningitidis serogroup A / serotype 4A (strain DSM 15465 / Z2491).